An 83-amino-acid chain; its full sequence is Cytochrome b559 subunit alpha (83 aa).

Residues valine 21–tryptophan 35 form a helical membrane-spanning segment. Histidine 23 provides a ligand contact to heme.

It belongs to the PsbE/PsbF family. As to quaternary structure, heterodimer of an alpha subunit and a beta subunit. PSII is composed of 1 copy each of membrane proteins PsbA, PsbB, PsbC, PsbD, PsbE, PsbF, PsbH, PsbI, PsbJ, PsbK, PsbL, PsbM, PsbT, PsbX, PsbY, PsbZ, Psb30/Ycf12, at least 3 peripheral proteins of the oxygen-evolving complex and a large number of cofactors. It forms dimeric complexes. It depends on heme b as a cofactor.

It is found in the plastid. The protein localises to the chloroplast thylakoid membrane. Its function is as follows. This b-type cytochrome is tightly associated with the reaction center of photosystem II (PSII). PSII is a light-driven water:plastoquinone oxidoreductase that uses light energy to abstract electrons from H(2)O, generating O(2) and a proton gradient subsequently used for ATP formation. It consists of a core antenna complex that captures photons, and an electron transfer chain that converts photonic excitation into a charge separation. This is Cytochrome b559 subunit alpha from Oltmannsiellopsis viridis (Marine flagellate).